The primary structure comprises 230 residues: MTKEVPYYCDNDDNNIIRLFIIRHGQTEHNVKKILQGHKDTSINPTGEEQATKLGHYLRSRGIHFDKVVSSDLKRCRQTTALVLKHSKQENVPTSYTSGLRERYMGVIEGMQITEAEKYADKHGEGSFRNFGEKSDDFVARLTGCVEEEVAEASNEGVKNLALVSHGGAIRMILQWLKYENHQAHKIIVFNTSVTIVDYVKDSKQFIVRRVGNTQHLGDGEFVVSDLRLR.

His-24 functions as the Tele-phosphohistidine intermediate in the catalytic mechanism. Residues Gln-36 to Gly-37 and Glu-102 to Met-105 contribute to the substrate site. Glu-102 serves as the catalytic Proton donor/acceptor.

This sequence belongs to the phosphoglycerate mutase family. BPG-dependent PGAM subfamily.

The protein localises to the cytoplasm. It localises to the nucleus. Functionally, metal-independent phosphatase active against a broad range of phosphorylated substrates including nucleoside tri- and diphosphates, phosphorylated organic acids, and amino acids. Shows no activity against phytic acid, phosphorylated carbohydrates, and nucleoside monophosphates. This is Broad-specificity phosphatase YOR283W from Saccharomyces cerevisiae (strain ATCC 204508 / S288c) (Baker's yeast).